The primary structure comprises 191 residues: Large ribosomal subunit protein uL5 (191 aa).

This sequence belongs to the universal ribosomal protein uL5 family. Part of the 50S ribosomal subunit; part of the 5S rRNA/L5/L18/L25 subcomplex. Contacts the 5S rRNA and the P site tRNA. Forms a bridge to the 30S subunit in the 70S ribosome.

Its function is as follows. This is one of the proteins that bind and probably mediate the attachment of the 5S RNA into the large ribosomal subunit, where it forms part of the central protuberance. In the 70S ribosome it contacts protein S13 of the 30S subunit (bridge B1b), connecting the 2 subunits; this bridge is implicated in subunit movement. Contacts the P site tRNA; the 5S rRNA and some of its associated proteins might help stabilize positioning of ribosome-bound tRNAs. The protein is Large ribosomal subunit protein uL5 of Micrococcus luteus (strain ATCC 4698 / DSM 20030 / JCM 1464 / CCM 169 / CCUG 5858 / IAM 1056 / NBRC 3333 / NCIMB 9278 / NCTC 2665 / VKM Ac-2230) (Micrococcus lysodeikticus).